The primary structure comprises 525 residues: Cytochrome P450 4V2 (525 aa).

The chain crosses the membrane as a helical span at residues 14-34; the sequence is LLWGAASAVSLAGATILISIF. Residues E329 and C467 each coordinate heme.

The protein belongs to the cytochrome P450 family. Heme is required as a cofactor.

Its subcellular location is the endoplasmic reticulum membrane. It catalyses the reaction dodecanoate + reduced [NADPH--hemoprotein reductase] + O2 = 12-hydroxydodecanoate + oxidized [NADPH--hemoprotein reductase] + H2O + H(+). The enzyme catalyses tetradecanoate + reduced [NADPH--hemoprotein reductase] + O2 = 14-hydroxytetradecanoate + oxidized [NADPH--hemoprotein reductase] + H2O + H(+). It carries out the reaction hexadecanoate + reduced [NADPH--hemoprotein reductase] + O2 = 16-hydroxyhexadecanoate + oxidized [NADPH--hemoprotein reductase] + H2O + H(+). The catalysed reaction is (5Z,8Z,11Z,14Z,17Z)-eicosapentaenoate + reduced [NADPH--hemoprotein reductase] + O2 = 20-hydroxy-(5Z,8Z,11Z,14Z,17Z)-eicosapentaenoate + oxidized [NADPH--hemoprotein reductase] + H2O + H(+). It catalyses the reaction (4Z,7Z,10Z,13Z,16Z,19Z)-docosahexaenoate + reduced [NADPH--hemoprotein reductase] + O2 = 22-hydroxy-(4Z,7Z,10Z,13Z,16Z,19Z)-docosahexaenoate + oxidized [NADPH--hemoprotein reductase] + H2O + H(+). It participates in lipid metabolism; fatty acid metabolism. With respect to regulation, inhibited by N-hydroxy-N'-(4-n-butyl-2-methylphenyl formamidine)(HET0016) with an IC(50) of 38 nM. Its function is as follows. A cytochrome P450 monooxygenase involved in fatty acid metabolism in the eye. Catalyzes the omega-hydroxylation of polyunsaturated fatty acids (PUFAs) docosahexaenoate (DHA) and its precursor eicosapentaenoate (EPA), and may contribute to the homeostasis of these retinal PUFAs. Omega hydroxylates saturated fatty acids such as laurate, myristate and palmitate, the catalytic efficiency decreasing in the following order: myristate &gt; laurate &gt; palmitate (C14&gt;C12&gt;C16). Mechanistically, uses molecular oxygen inserting one oxygen atom into a substrate, and reducing the second into a water molecule, with two electrons provided by NADPH via cytochrome P450 reductase (CPR; NADPH-ferrihemoprotein reductase). This Mus musculus (Mouse) protein is Cytochrome P450 4V2 (Cyp4v2).